A 130-amino-acid chain; its full sequence is Serum amyloid A-4 protein (130 aa).

The N-terminal stretch at 1-18 (MRLATVIVLCSLFLGVSG) is a signal peptide. The segment at 109–130 (EEWGRSGKNPNHFRPEGLPEKF) is disordered. Over residues 121–130 (FRPEGLPEKF) the composition is skewed to basic and acidic residues.

It belongs to the SAA family. In terms of assembly, apolipoprotein of the HDL complex. Expressed by the liver; secreted in plasma.

The protein localises to the secreted. Major acute phase reactant. In Mus musculus (Mouse), this protein is Serum amyloid A-4 protein.